The sequence spans 305 residues: Insulin-like growth factor-binding protein 2 (305 aa).

The signal sequence occupies residues 1–34; the sequence is MLPRLGGPALPLLLPSLLLLLLLGAGGCGPGVRA. The IGFBP N-terminal domain maps to 36-118; it reads VLFRCPPCTP…VTGAGTCEKR (83 aa). Disulfide bonds link C40-C68, C43-C70, C51-C71, C59-C74, C82-C95, C89-C115, C207-C241, C252-C263, and C265-C286. The Thyroglobulin type-1 domain occupies 204–286; that stretch reads RTPCQQELDQ…APTIRGDPEC (83 aa). The Cell attachment site signature appears at 281 to 283; it reads RGD.

In terms of assembly, interacts with IGF1. Interacts with IGF2. Interacts (via RGD motif) with integrin alpha5/ITGA5; this interaction induces cell migration, adhesion or apoptosis according to the context. Interacts with PTPRB; this interaction leads to PTPRB dimerization and inactivation. Cleaved by MMP9 leading to release of free IGF2 from IGFBP2-IGF2 complex, which contributes to enhance the motility and the growth of astrocytes. Post-translationally, O-glycosylated. In terms of tissue distribution, highly expressed in adult liver, but also in kidney, lung, brain, spleen, testis and ovary.

The protein localises to the secreted. Its function is as follows. Multifunctional protein that plays a critical role in regulating the availability of IGFs such as IGF1 and IGF2 to their receptors and thereby regulates IGF-mediated cellular processes including proliferation, differentiation, and apoptosis in a cell-type specific manner. Functions coordinately with receptor protein tyrosine phosphatase beta/PTPRB and the IGF1 receptor to regulate IGF1-mediated signaling by stimulating the phosphorylation of PTEN leading to its inactivation and AKT1 activation. Plays a positive role in cell migration via interaction with integrin alpha5/ITGA5 through an RGD motif. Additionally, interaction with ITGA5/ITGB1 enhances the adhesion of endothelial progenitor cells to endothelial cells. Upon mitochondrial damage, facilitates apoptosis with ITGA5 of podocytes, and then activates the phosphorylation of focal adhesion kinase (FAK)-mediated mitochondrial injury. The protein is Insulin-like growth factor-binding protein 2 (Igfbp2) of Mus musculus (Mouse).